Consider the following 60-residue polypeptide: Large ribosomal subunit protein bL32 (60 aa).

Belongs to the bacterial ribosomal protein bL32 family.

The polypeptide is Large ribosomal subunit protein bL32 (Streptococcus sanguinis (strain SK36)).